Consider the following 332-residue polypeptide: L-lactate dehydrogenase A chain (332 aa).

Ala-2 is modified (N-acetylalanine). N6-acetyllysine; alternate is present on Lys-5. N6-succinyllysine; alternate is present on Lys-5. An N6-acetyllysine modification is found at Lys-14. Residue 29-57 (GAVGMACAISILMKDLADELALVDVMEDK) coordinates NAD(+). An N6-acetyllysine; alternate modification is found at Lys-57. Lys-57 participates in a covalent cross-link: Glycyl lysine isopeptide (Lys-Gly) (interchain with G-Cter in SUMO2); alternate. Position 81 is an N6-acetyllysine (Lys-81). Residue Arg-99 coordinates NAD(+). Arg-106 lines the substrate pocket. Lys-118 bears the N6-acetyllysine; alternate mark. An N6-succinyllysine; alternate modification is found at Lys-118. Position 126 is an N6-acetyllysine (Lys-126). Asn-138 contributes to the NAD(+) binding site. Substrate contacts are provided by Asn-138 and Arg-169. His-193 (proton acceptor) is an active-site residue. N6-acetyllysine occurs at positions 224 and 232. A Phosphotyrosine modification is found at Tyr-239. Lys-243 is subject to N6-acetyllysine. Residue Thr-248 coordinates substrate. A Phosphothreonine modification is found at Thr-309. Residue Ser-310 is modified to Phosphoserine. Lys-318 bears the N6-acetyllysine; alternate mark. Lys-318 carries the N6-succinyllysine; alternate modification. Thr-322 bears the Phosphothreonine mark.

This sequence belongs to the LDH/MDH superfamily. LDH family. In terms of assembly, homotetramer. Interacts with PTEN upstream reading frame protein MP31. In terms of processing, ISGylated.

The protein resides in the cytoplasm. It carries out the reaction (S)-lactate + NAD(+) = pyruvate + NADH + H(+). It functions in the pathway fermentation; pyruvate fermentation to lactate; (S)-lactate from pyruvate: step 1/1. Interconverts simultaneously and stereospecifically pyruvate and lactate with concomitant interconversion of NADH and NAD(+). This chain is L-lactate dehydrogenase A chain (LDHA), found in Oryctolagus cuniculus (Rabbit).